The chain runs to 106 residues: Iron-sulfur cluster assembly protein CyaY (106 aa).

This sequence belongs to the frataxin family.

Functionally, involved in iron-sulfur (Fe-S) cluster assembly. May act as a regulator of Fe-S biogenesis. The chain is Iron-sulfur cluster assembly protein CyaY from Serratia proteamaculans (strain 568).